Reading from the N-terminus, the 343-residue chain is GDP-D-glucose phosphorylase 1 (343 aa).

The active-site Tele-GMP-histidine intermediate is the His183.

The protein belongs to the GDPGP1 family.

The protein localises to the cytoplasm. It catalyses the reaction GDP-alpha-D-glucose + phosphate = alpha-D-glucose 1-phosphate + GDP + H(+). In terms of biological role, specific and highly efficient GDP-D-glucose phosphorylase regulating the levels of GDP-D-glucose in cells. This chain is GDP-D-glucose phosphorylase 1 (gdpgp1), found in Danio rerio (Zebrafish).